A 204-amino-acid polypeptide reads, in one-letter code: Putative AgrB-like protein (204 aa).

4 helical membrane passes run 52–74, 87–107, 111–131, and 156–176; these read YGIALVTGLLLQTVTVHLSYLWL, LNCTLISLMMFVLAPFVFQNI, NWIVLGTFGFILLNMFLFAPA, and LILTGIALLIPFAEMKTLIMV.

This sequence belongs to the AgrB family.

The protein resides in the cell membrane. May be involved in the proteolytic processing of a quorum sensing system signal molecule precursor. The sequence is that of Putative AgrB-like protein from Listeria monocytogenes serotype 4b (strain CLIP80459).